Consider the following 371-residue polypeptide: uncharacterized protein (371 aa).

Belongs to the serpin family.

This is an uncharacterized protein from Pyrobaculum aerophilum (strain ATCC 51768 / DSM 7523 / JCM 9630 / CIP 104966 / NBRC 100827 / IM2).